The chain runs to 311 residues: Homoserine kinase (311 aa).

89–99 (PFARGLGSSAT) provides a ligand contact to ATP.

It belongs to the GHMP kinase family. Homoserine kinase subfamily.

Its subcellular location is the cytoplasm. It carries out the reaction L-homoserine + ATP = O-phospho-L-homoserine + ADP + H(+). The protein operates within amino-acid biosynthesis; L-threonine biosynthesis; L-threonine from L-aspartate: step 4/5. Catalyzes the ATP-dependent phosphorylation of L-homoserine to L-homoserine phosphate. This is Homoserine kinase from Halothermothrix orenii (strain H 168 / OCM 544 / DSM 9562).